Here is a 507-residue protein sequence, read N- to C-terminus: Putative UDP-glucuronosyltransferase ugt-60 (507 aa).

The first 15 residues, 1-15, serve as a signal peptide directing secretion; it reads MYLPIFCIFLSVVDS. An N-linked (GlcNAc...) asparagine glycan is attached at Asn312. The chain crosses the membrane as a helical span at residues 379 to 399; that stretch reads YNSFLEAAQAGIPAVLMPLFA.

Belongs to the UDP-glycosyltransferase family.

It localises to the membrane. It catalyses the reaction glucuronate acceptor + UDP-alpha-D-glucuronate = acceptor beta-D-glucuronoside + UDP + H(+). This Caenorhabditis elegans protein is Putative UDP-glucuronosyltransferase ugt-60 (ugt-60).